A 180-amino-acid chain; its full sequence is Cytidylate kinase (180 aa).

Residue 7–15 (GLPGSGTTT) participates in ATP binding.

Belongs to the cytidylate kinase family. Type 2 subfamily.

The protein resides in the cytoplasm. It catalyses the reaction CMP + ATP = CDP + ADP. The enzyme catalyses dCMP + ATP = dCDP + ADP. The chain is Cytidylate kinase from Methanosarcina acetivorans (strain ATCC 35395 / DSM 2834 / JCM 12185 / C2A).